Reading from the N-terminus, the 145-residue chain is Large ribosomal subunit protein uL13 (145 aa).

The protein belongs to the universal ribosomal protein uL13 family. In terms of assembly, part of the 50S ribosomal subunit.

In terms of biological role, this protein is one of the early assembly proteins of the 50S ribosomal subunit, although it is not seen to bind rRNA by itself. It is important during the early stages of 50S assembly. This chain is Large ribosomal subunit protein uL13, found in Staphylococcus haemolyticus (strain JCSC1435).